The sequence spans 239 residues: Putative ABC transporter ATP-binding protein AlbC (239 aa).

One can recognise an ABC transporter domain in the interval 4 to 238 (LDIHDVSVWY…RREFFEVIGH (235 aa)). 37 to 44 (GVNGAGKT) contacts ATP.

It belongs to the ABC transporter superfamily.

Involved in the production of the bacteriocin subtilosin. Required for immunity to subtilosin. The chain is Putative ABC transporter ATP-binding protein AlbC (albC) from Bacillus subtilis (strain 168).